The following is a 443-amino-acid chain: Glycerol-3-phosphate acyltransferase 3-like (443 aa).

Helical transmembrane passes span 15 to 35, 146 to 166, and 170 to 190; these read WFSC…SLGI, ISLR…CILL, and ITLT…VGFL. The HXXXXD motif signature appears at 238–243; that stretch reads HTSPID. The chain crosses the membrane as a helical span at residues 358–378; that stretch reads IMSYLLRMMTSWAIVCNVWYL.

It belongs to the 1-acyl-sn-glycerol-3-phosphate acyltransferase family.

The protein resides in the endoplasmic reticulum membrane. The enzyme catalyses sn-glycerol 3-phosphate + an acyl-CoA = a 1-acyl-sn-glycero-3-phosphate + CoA. It carries out the reaction a 1-acyl-sn-glycero-3-phosphate + an acyl-CoA = a 1,2-diacyl-sn-glycero-3-phosphate + CoA. It functions in the pathway glycerolipid metabolism; triacylglycerol biosynthesis. The protein operates within phospholipid metabolism; CDP-diacylglycerol biosynthesis; CDP-diacylglycerol from sn-glycerol 3-phosphate: step 1/3. Its function is as follows. May transfer the acyl-group from acyl-coA to the sn-1 position of glycerol-3-phosphate, an essential step in glycerolipid biosynthesis. Also transfers the acyl-group from acyl-coA to the sn-2 position of 1-acyl-sn-glycerol-3-phosphate (lysophosphatidic acid, or LPA), forming 1,2-diacyl-sn-glycerol-3-phosphate (phosphatidic acid, or PA). In Danio rerio (Zebrafish), this protein is Glycerol-3-phosphate acyltransferase 3-like (agpat9l).